The primary structure comprises 514 residues: 2,3-bisphosphoglycerate-independent phosphoglycerate mutase (514 aa).

Mn(2+) is bound by residues aspartate 14 and serine 64. Serine 64 serves as the catalytic Phosphoserine intermediate. Substrate is bound by residues histidine 125, 155–156, arginine 187, arginine 193, 263–266, and lysine 337; these read RD and RADR. Mn(2+)-binding residues include aspartate 404, histidine 408, aspartate 445, histidine 446, and histidine 464.

The protein belongs to the BPG-independent phosphoglycerate mutase family. As to quaternary structure, monomer. Mn(2+) serves as cofactor.

The enzyme catalyses (2R)-2-phosphoglycerate = (2R)-3-phosphoglycerate. It participates in carbohydrate degradation; glycolysis; pyruvate from D-glyceraldehyde 3-phosphate: step 3/5. Catalyzes the interconversion of 2-phosphoglycerate and 3-phosphoglycerate. This chain is 2,3-bisphosphoglycerate-independent phosphoglycerate mutase, found in Serratia proteamaculans (strain 568).